The primary structure comprises 449 residues: Exopolygalacturonase X-2 (449 aa).

Positions 1–24 are cleaved as a signal peptide; the sequence is MGFKRTIGLLLGILLALDQVSVLA. Residues asparagine 136, asparagine 172, and asparagine 208 are each glycosylated (N-linked (GlcNAc...) asparagine). The stretch at 240–261 is one PbH1 1 repeat; it reads SDNVVIQNSVINHDDDCVSFKP. Aspartate 254 (proton donor) is an active-site residue. Cysteine 256 and cysteine 273 form a disulfide bridge. 2 N-linked (GlcNAc...) asparagine glycosylation sites follow: asparagine 262 and asparagine 274. PbH1 repeat units lie at residues 263 to 283 and 294 to 315; these read STNIIVQGLHCNGSHGISVGS and VSDLYIYNNTMANTTTAARLKV. Histidine 277 is a catalytic residue. 4 N-linked (GlcNAc...) asparagine glycosylation sites follow: asparagine 301, asparagine 306, asparagine 340, and asparagine 365. A disulfide bridge links cysteine 403 with cysteine 409. N-linked (GlcNAc...) asparagine glycosylation is found at asparagine 416 and asparagine 421.

This sequence belongs to the glycosyl hydrolase 28 family.

It is found in the secreted. It catalyses the reaction [(1-&gt;4)-alpha-D-galacturonosyl](n) + H2O = alpha-D-galacturonate + [(1-&gt;4)-alpha-D-galacturonosyl](n-1). Specific in hydrolyzing the terminal glycosidic bond of polygalacturonic acid and oligogalacturonates. This is Exopolygalacturonase X-2 (pgaX-2) from Emericella nidulans (strain FGSC A4 / ATCC 38163 / CBS 112.46 / NRRL 194 / M139) (Aspergillus nidulans).